A 603-amino-acid polypeptide reads, in one-letter code: Elongation factor 4 (603 aa).

A tr-type G domain is found at 6–188; that stretch reads SKIRNFCIIA…QIVKKIPAPT (183 aa). Residues 18–23 and 135–138 contribute to the GTP site; these read DHGKST and NKVD.

Belongs to the TRAFAC class translation factor GTPase superfamily. Classic translation factor GTPase family. LepA subfamily.

It is found in the cell membrane. The enzyme catalyses GTP + H2O = GDP + phosphate + H(+). In terms of biological role, required for accurate and efficient protein synthesis under certain stress conditions. May act as a fidelity factor of the translation reaction, by catalyzing a one-codon backward translocation of tRNAs on improperly translocated ribosomes. Back-translocation proceeds from a post-translocation (POST) complex to a pre-translocation (PRE) complex, thus giving elongation factor G a second chance to translocate the tRNAs correctly. Binds to ribosomes in a GTP-dependent manner. This is Elongation factor 4 from Agathobacter rectalis (strain ATCC 33656 / DSM 3377 / JCM 17463 / KCTC 5835 / VPI 0990) (Eubacterium rectale).